The sequence spans 521 residues: Bifunctional purine biosynthesis protein PurH (521 aa).

The MGS-like domain occupies 1-147 (MAKITRALIS…KNNADVTVVV (147 aa)).

This sequence belongs to the PurH family.

It catalyses the reaction (6R)-10-formyltetrahydrofolate + 5-amino-1-(5-phospho-beta-D-ribosyl)imidazole-4-carboxamide = 5-formamido-1-(5-phospho-D-ribosyl)imidazole-4-carboxamide + (6S)-5,6,7,8-tetrahydrofolate. The catalysed reaction is IMP + H2O = 5-formamido-1-(5-phospho-D-ribosyl)imidazole-4-carboxamide. Its pathway is purine metabolism; IMP biosynthesis via de novo pathway; 5-formamido-1-(5-phospho-D-ribosyl)imidazole-4-carboxamide from 5-amino-1-(5-phospho-D-ribosyl)imidazole-4-carboxamide (10-formyl THF route): step 1/1. The protein operates within purine metabolism; IMP biosynthesis via de novo pathway; IMP from 5-formamido-1-(5-phospho-D-ribosyl)imidazole-4-carboxamide: step 1/1. The protein is Bifunctional purine biosynthesis protein PurH of Geotalea uraniireducens (strain Rf4) (Geobacter uraniireducens).